The sequence spans 316 residues: L-lactate dehydrogenase 3 (316 aa).

NAD(+) is bound by residues valine 16, aspartate 37, arginine 42, and tyrosine 68. Arginine 91 serves as a coordination point for substrate. Residues serine 104, 121 to 123, and threonine 146 contribute to the NAD(+) site; that span reads ASN. Residue 123–126 coordinates substrate; that stretch reads NPVD. 151-154 lines the substrate pocket; the sequence is DSSR. Residues arginine 156 and histidine 171 each coordinate beta-D-fructose 1,6-bisphosphate. The active-site Proton acceptor is histidine 178. Position 233 (threonine 233) interacts with substrate.

The protein belongs to the LDH/MDH superfamily. LDH family. Homotetramer.

It is found in the cytoplasm. It catalyses the reaction (S)-lactate + NAD(+) = pyruvate + NADH + H(+). It participates in fermentation; pyruvate fermentation to lactate; (S)-lactate from pyruvate: step 1/1. Allosterically activated by fructose 1,6-bisphosphate (FBP). In terms of biological role, catalyzes the conversion of lactate to pyruvate. The sequence is that of L-lactate dehydrogenase 3 from Bacillus cereus (strain ATCC 14579 / DSM 31 / CCUG 7414 / JCM 2152 / NBRC 15305 / NCIMB 9373 / NCTC 2599 / NRRL B-3711).